The primary structure comprises 209 residues: 2-phospho-L-lactate guanylyltransferase (209 aa).

This sequence belongs to the CofC family. Homodimer.

It catalyses the reaction (2S)-2-phospholactate + GTP + H(+) = (2S)-lactyl-2-diphospho-5'-guanosine + diphosphate. The protein operates within cofactor biosynthesis; coenzyme F420 biosynthesis. Functionally, guanylyltransferase that catalyzes the activation of (2S)-2-phospholactate (2-PL) as (2S)-lactyl-2-diphospho-5'-guanosine, via the condensation of 2-PL with GTP. It is involved in the biosynthesis of coenzyme F420, a hydride carrier cofactor. This is 2-phospho-L-lactate guanylyltransferase from Halobacterium salinarum (strain ATCC 29341 / DSM 671 / R1).